Consider the following 109-residue polypeptide: Ribonuclease P protein component (109 aa).

Belongs to the RnpA family. Consists of a catalytic RNA component (M1 or rnpB) and a protein subunit.

The enzyme catalyses Endonucleolytic cleavage of RNA, removing 5'-extranucleotides from tRNA precursor.. RNaseP catalyzes the removal of the 5'-leader sequence from pre-tRNA to produce the mature 5'-terminus. It can also cleave other RNA substrates such as 4.5S RNA. The protein component plays an auxiliary but essential role in vivo by binding to the 5'-leader sequence and broadening the substrate specificity of the ribozyme. The protein is Ribonuclease P protein component of Streptococcus agalactiae serotype Ia (strain ATCC 27591 / A909 / CDC SS700).